Here is a 429-residue protein sequence, read N- to C-terminus: Septin-11 (429 aa).

Ala-2 bears the N-acetylalanine mark. A Phosphoserine modification is found at Ser-9. Residues 38–304 enclose the Septin-type G domain; the sequence is QGFCFNILCV…ELYRRCKLEE (267 aa). The tract at residues 48–55 is G1 motif; it reads GETGIGKS. GTP-binding positions include 48 to 55, Gly-103, 184 to 192, Gly-238, and Arg-253; these read GETGIGKS and KADTIAKNE. Residues 100–103 are G3 motif; sequence DTVG. The segment at 183–186 is G4 motif; that stretch reads AKAD. A coiled-coil region spans residues 320–415; sequence QETYEAKRNE…QSQAQQSGAQ (96 aa). Residues 398–429 form a disordered region; the sequence is KKAAAQLLQSQAQQSGAQQTKKDKDKKNASFT. Over residues 401–416 the composition is skewed to low complexity; the sequence is AAQLLQSQAQQSGAQQ. Over residues 417–429 the composition is skewed to basic and acidic residues; sequence TKKDKDKKNASFT.

Belongs to the TRAFAC class TrmE-Era-EngA-EngB-Septin-like GTPase superfamily. Septin GTPase family. In terms of assembly, septins polymerize into heterooligomeric protein complexes that form filaments, and can associate with cellular membranes, actin filaments and microtubules. Forms homooligomers. GTPase activity is required for filament formation. Interacts with SEPTIN7, SEPTIN9 and SEPTIN12. As to expression, widely expressed, except in leukocytes.

It is found in the cytoplasm. The protein resides in the cytoskeleton. It localises to the synapse. Its subcellular location is the cell projection. The protein localises to the dendritic spine. It is found in the axon. Functionally, filament-forming cytoskeletal GTPase. May play a role in cytokinesis (Potential). May play a role in the cytoarchitecture of neurons, including dendritic arborization and dendritic spines, and in GABAergic synaptic connectivity. During Listeria monocytogenes infection, not required for the bacterial entry process, but restricts its efficacy. The polypeptide is Septin-11 (Homo sapiens (Human)).